The chain runs to 396 residues: uncharacterized protein (396 aa).

The protein belongs to the NAD(P)-dependent epimerase/dehydratase family. NAD(+) is required as a cofactor. NADP(+) serves as cofactor.

Functionally, putative nucleotide sugar epimerase/dehydrogenase. This is an uncharacterized protein from Sinorhizobium fredii (strain NBRC 101917 / NGR234).